The following is a 425-amino-acid chain: Histidine--tRNA ligase (425 aa).

The protein belongs to the class-II aminoacyl-tRNA synthetase family. As to quaternary structure, homodimer.

The protein resides in the cytoplasm. It catalyses the reaction tRNA(His) + L-histidine + ATP = L-histidyl-tRNA(His) + AMP + diphosphate + H(+). The sequence is that of Histidine--tRNA ligase from Shewanella oneidensis (strain ATCC 700550 / JCM 31522 / CIP 106686 / LMG 19005 / NCIMB 14063 / MR-1).